The following is a 135-amino-acid chain: Sex-regulated protein janus-A (135 aa).

K37 lines the substrate pocket. Catalysis depends on H63, which acts as the Proton acceptor. Position 104-106 (104-106 (SQG)) interacts with substrate.

It belongs to the janus family.

In terms of biological role, janA and janB regulate somatic sex differentiation. This is Sex-regulated protein janus-A (janA) from Drosophila mauritiana (Fruit fly).